Here is a 600-residue protein sequence, read N- to C-terminus: Aspartate--tRNA(Asp/Asn) ligase (600 aa).

Glu181 contributes to the L-aspartate binding site. The tract at residues 205–208 is aspartate; that stretch reads QQYK. L-aspartate is bound at residue Arg227. Residues 227 to 229 and Gln236 each bind ATP; that span reads RDE. His455 provides a ligand contact to L-aspartate. Glu490 is an ATP binding site. Arg497 contributes to the L-aspartate binding site. An ATP-binding site is contributed by 542–545; sequence GLDR.

Belongs to the class-II aminoacyl-tRNA synthetase family. Type 1 subfamily. Homodimer.

It is found in the cytoplasm. The catalysed reaction is tRNA(Asx) + L-aspartate + ATP = L-aspartyl-tRNA(Asx) + AMP + diphosphate. Aspartyl-tRNA synthetase with relaxed tRNA specificity since it is able to aspartylate not only its cognate tRNA(Asp) but also tRNA(Asn). Reaction proceeds in two steps: L-aspartate is first activated by ATP to form Asp-AMP and then transferred to the acceptor end of tRNA(Asp/Asn). This is Aspartate--tRNA(Asp/Asn) ligase from Methylacidiphilum infernorum (isolate V4) (Methylokorus infernorum (strain V4)).